We begin with the raw amino-acid sequence, 320 residues long: Cytochrome f (320 aa).

The first 35 residues, 1 to 35 (MQTRNAFSWLKKQITRSISVSLMIYILTRTSISSA), serve as a signal peptide directing secretion. Heme contacts are provided by Tyr36, Cys56, Cys59, and His60. The chain crosses the membrane as a helical span at residues 286 to 305 (VQGLLFFLASVILAQIFLVL).

Belongs to the cytochrome f family. The 4 large subunits of the cytochrome b6-f complex are cytochrome b6, subunit IV (17 kDa polypeptide, petD), cytochrome f and the Rieske protein, while the 4 small subunits are PetG, PetL, PetM and PetN. The complex functions as a dimer. It depends on heme as a cofactor.

Its subcellular location is the plastid. The protein localises to the chloroplast thylakoid membrane. Its function is as follows. Component of the cytochrome b6-f complex, which mediates electron transfer between photosystem II (PSII) and photosystem I (PSI), cyclic electron flow around PSI, and state transitions. The polypeptide is Cytochrome f (Atropa belladonna (Belladonna)).